A 469-amino-acid chain; its full sequence is UDP-N-acetylmuramate--L-alanine ligase (469 aa).

Residue 120-126 coordinates ATP; sequence GTHGKTT.

It belongs to the MurCDEF family.

The protein localises to the cytoplasm. The enzyme catalyses UDP-N-acetyl-alpha-D-muramate + L-alanine + ATP = UDP-N-acetyl-alpha-D-muramoyl-L-alanine + ADP + phosphate + H(+). It participates in cell wall biogenesis; peptidoglycan biosynthesis. In terms of biological role, cell wall formation. In Acetivibrio thermocellus (strain ATCC 27405 / DSM 1237 / JCM 9322 / NBRC 103400 / NCIMB 10682 / NRRL B-4536 / VPI 7372) (Clostridium thermocellum), this protein is UDP-N-acetylmuramate--L-alanine ligase.